Consider the following 291-residue polypeptide: Bis(5'-nucleosyl)-tetraphosphatase, symmetrical (291 aa).

It belongs to the Ap4A hydrolase family.

The enzyme catalyses P(1),P(4)-bis(5'-adenosyl) tetraphosphate + H2O = 2 ADP + 2 H(+). Hydrolyzes diadenosine 5',5'''-P1,P4-tetraphosphate to yield ADP. The chain is Bis(5'-nucleosyl)-tetraphosphatase, symmetrical from Coxiella burnetii (strain RSA 331 / Henzerling II).